A 682-amino-acid chain; its full sequence is Potassium-transporting ATPase ATP-binding subunit (682 aa).

The next 4 helical transmembrane spans lie at 34-54 (PVMFIVWIGSLLTTCICIAMA), 62-82 (ALFSAAISGWLWVTVLFANFA), 219-239 (IALTILLIALTIVFLLATATL), and 254-274 (VLVALLVCLIPTTIGGLLSAI). Aspartate 307 acts as the 4-aspartylphosphate intermediate in catalysis. Residues aspartate 344, glutamate 348, 377 to 384 (FTAQSRMS), and lysine 395 each bind ATP. Mg(2+)-binding residues include aspartate 518 and aspartate 522. Helical transmembrane passes span 588-608 (FAIIPAAFAATYPQLNALNIM), 616-636 (AILSAVIFNALIIVFLIPLAL), and 656-676 (IYGLGGLLVPFIGIKVIDLLL).

The protein belongs to the cation transport ATPase (P-type) (TC 3.A.3) family. Type IA subfamily. As to quaternary structure, the system is composed of three essential subunits: KdpA, KdpB and KdpC.

The protein localises to the cell inner membrane. The catalysed reaction is K(+)(out) + ATP + H2O = K(+)(in) + ADP + phosphate + H(+). In terms of biological role, part of the high-affinity ATP-driven potassium transport (or Kdp) system, which catalyzes the hydrolysis of ATP coupled with the electrogenic transport of potassium into the cytoplasm. This subunit is responsible for energy coupling to the transport system and for the release of the potassium ions to the cytoplasm. The chain is Potassium-transporting ATPase ATP-binding subunit from Escherichia coli O17:K52:H18 (strain UMN026 / ExPEC).